A 408-amino-acid polypeptide reads, in one-letter code: Imidazolonepropionase (408 aa).

Fe(3+) is bound by residues His-73 and His-75. Zn(2+) is bound by residues His-73 and His-75. 3 residues coordinate 4-imidazolone-5-propanoate: Arg-82, Tyr-145, and His-178. Position 145 (Tyr-145) interacts with N-formimidoyl-L-glutamate. His-243 contacts Fe(3+). His-243 contributes to the Zn(2+) binding site. Gln-246 contributes to the 4-imidazolone-5-propanoate binding site. Position 318 (Asp-318) interacts with Fe(3+). Asp-318 contributes to the Zn(2+) binding site. Positions 320 and 322 each coordinate N-formimidoyl-L-glutamate. 4-imidazolone-5-propanoate is bound at residue Ser-323.

This sequence belongs to the metallo-dependent hydrolases superfamily. HutI family. Requires Zn(2+) as cofactor. The cofactor is Fe(3+).

It localises to the cytoplasm. It catalyses the reaction 4-imidazolone-5-propanoate + H2O = N-formimidoyl-L-glutamate. Its pathway is amino-acid degradation; L-histidine degradation into L-glutamate; N-formimidoyl-L-glutamate from L-histidine: step 3/3. In terms of biological role, catalyzes the hydrolytic cleavage of the carbon-nitrogen bond in imidazolone-5-propanoate to yield N-formimidoyl-L-glutamate. It is the third step in the universal histidine degradation pathway. The protein is Imidazolonepropionase of Shewanella oneidensis (strain ATCC 700550 / JCM 31522 / CIP 106686 / LMG 19005 / NCIMB 14063 / MR-1).